Consider the following 124-residue polypeptide: Fluoride-specific ion channel FluC (124 aa).

4 consecutive transmembrane segments (helical) span residues 3–23, 34–54, 68–88, and 100–120; these read VLLIFLGCGAGGVARYGVSNL, IGTLIVNITGSLLMGILFIFI, LLLIGFLGGYTTFSSFSIETF, and ALNVLLSVALCIAGAWLGVLI. Residues G75 and T78 each contribute to the Na(+) site.

Belongs to the fluoride channel Fluc/FEX (TC 1.A.43) family.

The protein resides in the cell inner membrane. It catalyses the reaction fluoride(in) = fluoride(out). With respect to regulation, na(+) is not transported, but it plays an essential structural role and its presence is essential for fluoride channel function. Functionally, fluoride-specific ion channel. Important for reducing fluoride concentration in the cell, thus reducing its toxicity. The polypeptide is Fluoride-specific ion channel FluC (Coxiella burnetii (strain Dugway 5J108-111)).